The chain runs to 331 residues: Ornithine carbamoyltransferase, catabolic (331 aa).

Carbamoyl phosphate is bound by residues 57–60 (STRT), glutamine 82, arginine 106, and 133–136 (HPTQ). L-ornithine is bound by residues asparagine 166, aspartate 230, and 234 to 235 (SM). Residues 272–273 (CL) and arginine 317 contribute to the carbamoyl phosphate site.

It belongs to the aspartate/ornithine carbamoyltransferase superfamily. OTCase family.

Its subcellular location is the cytoplasm. The enzyme catalyses carbamoyl phosphate + L-ornithine = L-citrulline + phosphate + H(+). The protein operates within amino-acid degradation; L-arginine degradation via ADI pathway; carbamoyl phosphate from L-arginine: step 2/2. Reversibly catalyzes the transfer of the carbamoyl group from carbamoyl phosphate (CP) to the N(epsilon) atom of ornithine (ORN) to produce L-citrulline. The polypeptide is Ornithine carbamoyltransferase, catabolic (arcB) (Clostridium perfringens (strain ATCC 13124 / DSM 756 / JCM 1290 / NCIMB 6125 / NCTC 8237 / Type A)).